A 246-amino-acid polypeptide reads, in one-letter code: 3-deoxy-manno-octulosonate cytidylyltransferase (246 aa).

This sequence belongs to the KdsB family.

The protein resides in the cytoplasm. The enzyme catalyses 3-deoxy-alpha-D-manno-oct-2-ulosonate + CTP = CMP-3-deoxy-beta-D-manno-octulosonate + diphosphate. It functions in the pathway nucleotide-sugar biosynthesis; CMP-3-deoxy-D-manno-octulosonate biosynthesis; CMP-3-deoxy-D-manno-octulosonate from 3-deoxy-D-manno-octulosonate and CTP: step 1/1. Its pathway is bacterial outer membrane biogenesis; lipopolysaccharide biosynthesis. Activates KDO (a required 8-carbon sugar) for incorporation into bacterial lipopolysaccharide in Gram-negative bacteria. The protein is 3-deoxy-manno-octulosonate cytidylyltransferase of Rickettsia massiliae (strain Mtu5).